The primary structure comprises 388 residues: ATP phosphoribosyltransferase regulatory subunit (388 aa).

The protein belongs to the class-II aminoacyl-tRNA synthetase family. HisZ subfamily. In terms of assembly, heteromultimer composed of HisG and HisZ subunits.

The protein resides in the cytoplasm. It participates in amino-acid biosynthesis; L-histidine biosynthesis; L-histidine from 5-phospho-alpha-D-ribose 1-diphosphate: step 1/9. In terms of biological role, required for the first step of histidine biosynthesis. May allow the feedback regulation of ATP phosphoribosyltransferase activity by histidine. The polypeptide is ATP phosphoribosyltransferase regulatory subunit (Acinetobacter baylyi (strain ATCC 33305 / BD413 / ADP1)).